A 95-amino-acid polypeptide reads, in one-letter code: UPF0223 protein Bsph_1378 (95 aa).

This sequence belongs to the UPF0223 family.

In Lysinibacillus sphaericus (strain C3-41), this protein is UPF0223 protein Bsph_1378.